The sequence spans 279 residues: Ribosomal RNA small subunit methyltransferase J (279 aa).

S-adenosyl-L-methionine contacts are provided by residues 138-139 (ER) and aspartate 194.

This sequence belongs to the methyltransferase superfamily. RsmJ family.

It localises to the cytoplasm. The enzyme catalyses guanosine(1516) in 16S rRNA + S-adenosyl-L-methionine = N(2)-methylguanosine(1516) in 16S rRNA + S-adenosyl-L-homocysteine + H(+). Specifically methylates the guanosine in position 1516 of 16S rRNA. The protein is Ribosomal RNA small subunit methyltransferase J of Acinetobacter baumannii (strain SDF).